The following is a 412-amino-acid chain: Na(+)-translocating NADH-quinone reductase subunit B (412 aa).

3 consecutive transmembrane segments (helical) span residues 57–77 (MILVWFAVFPAMFWGMYNVGL), 127–147 (VFFLPIYITVFIVGGFWEVLF), and 163–183 (SILFALIVPPTLPLWQAALGI). An FMN phosphoryl threonine modification is found at Thr-236. The next 5 helical transmembrane spans lie at 270 to 290 (GSIGEVSTLMILIGGAIILFG), 297 to 317 (IVAGVMIGMIATATLFNVIGS), 322 to 342 (MFSMPWYWHLVLGGFAFGMMF), 358 to 378 (WSYGVLIGVMCVLIRVVNPAY), and 381 to 401 (GMMLAILFANLFAPLFDYLVV).

The protein belongs to the NqrB/RnfD family. In terms of assembly, composed of six subunits; NqrA, NqrB, NqrC, NqrD, NqrE and NqrF. It depends on FMN as a cofactor.

Its subcellular location is the cell inner membrane. It catalyses the reaction a ubiquinone + n Na(+)(in) + NADH + H(+) = a ubiquinol + n Na(+)(out) + NAD(+). In terms of biological role, NQR complex catalyzes the reduction of ubiquinone-1 to ubiquinol by two successive reactions, coupled with the transport of Na(+) ions from the cytoplasm to the periplasm. NqrA to NqrE are probably involved in the second step, the conversion of ubisemiquinone to ubiquinol. The chain is Na(+)-translocating NADH-quinone reductase subunit B from Klebsiella pneumoniae (strain 342).